The chain runs to 295 residues: Malonyl-[acyl-carrier protein] O-methyltransferase (295 aa).

This sequence belongs to the methyltransferase superfamily.

It catalyses the reaction malonyl-[ACP] + S-adenosyl-L-methionine = malonyl-[ACP] methyl ester + S-adenosyl-L-homocysteine. The protein operates within cofactor biosynthesis; biotin biosynthesis. In terms of biological role, converts the free carboxyl group of a malonyl-thioester to its methyl ester by transfer of a methyl group from S-adenosyl-L-methionine (SAM). It allows to synthesize pimeloyl-ACP via the fatty acid synthetic pathway. In Xylella fastidiosa (strain M23), this protein is Malonyl-[acyl-carrier protein] O-methyltransferase.